Consider the following 148-residue polypeptide: Methylglyoxal synthase (148 aa).

Residues valine 4–aspartate 148 form the MGS-like domain. Residues histidine 17, lysine 21, threonine 43–threonine 46, and serine 63–glycine 64 each bind substrate. Aspartate 69 serves as the catalytic Proton donor/acceptor. Histidine 96 contributes to the substrate binding site.

The protein belongs to the methylglyoxal synthase family.

The enzyme catalyses dihydroxyacetone phosphate = methylglyoxal + phosphate. In terms of biological role, catalyzes the formation of methylglyoxal from dihydroxyacetone phosphate. This chain is Methylglyoxal synthase, found in Leptospira interrogans serogroup Icterohaemorrhagiae serovar copenhageni (strain Fiocruz L1-130).